Reading from the N-terminus, the 290-residue chain is Plasma membrane ascorbate-dependent reductase CYBRD1 (290 aa).

Topologically, residues 1 to 7 are cytoplasmic; the sequence is MAMEGYR. The chain crosses the membrane as a helical span at residues 8 to 32; sequence GFLGLLVSALLVGFLSVIFVLIWVL. Positions 15–220 constitute a Cytochrome b561 domain; the sequence is SALLVGFLSV…FGALIFWIVT (206 aa). The Extracellular segment spans residues 33-47; sequence HFREGLGWNGSGLEF. The chain crosses the membrane as a helical span at residues 48-69; sequence NWHPVLAVTGFVFIQGIAIIVY. 3 residues coordinate heme b: histidine 50, arginine 70, and lysine 79. At 70–78 the chain is on the cytoplasmic side; the sequence is RLPWTWKCS. Residues lysine 79 and lysine 83 each contribute to the L-ascorbate site. Residues 79 to 105 form a helical membrane-spanning segment; sequence KLLMKSIHAGLNAVAAILAIISVVAVF. A heme b-binding site is contributed by histidine 86. Residues 106–118 are Extracellular-facing; sequence EYHNVQKVPHMYS. Histidine 108 contributes to the Fe(3+) binding site. Heme b-binding positions include 115 to 118 and histidine 120; that span reads HMYS. The helical transmembrane segment at 119–144 threads the bilayer; that stretch reads LHSWVGLTALILYIQQLVVGFFVFLL. The Cytoplasmic portion of the chain corresponds to 145-151; the sequence is PWAPPSL. Residue arginine 152 participates in L-ascorbate binding. Residues 152–179 traverse the membrane as a helical segment; it reads RAIVMPIHVYSGLLLFGTVIATVLMGVT. Heme b is bound by residues histidine 159 and glutamate 180. Residues 180–197 are Extracellular-facing; it reads EKLFFVLKHPSYHSFPPE. The helical transmembrane segment at 198–222 threads the bilayer; it reads GVFTNTLGLLILVFGALIFWIVTRP. Residues 223-290 are Cytoplasmic-facing; sequence QWKRPREPGS…LADSGQRSTM (68 aa). Lysine 225 is a binding site for heme b. Residue serine 232 is modified to Phosphoserine. The disordered stretch occupies residues 257–290; that stretch reads SMDAADPADAESSSEGAARKRTLGLADSGQRSTM. Positions 260-272 are enriched in low complexity; sequence AADPADAESSSEG. Threonine 289 bears the Phosphothreonine mark.

In terms of assembly, homodimer. Heme b is required as a cofactor. In terms of tissue distribution, highly expressed in the brush-border membrane of duodenal enterocytes (at protein level). Also expressed in liver and spleen.

Its subcellular location is the cell membrane. The protein localises to the apical cell membrane. The catalysed reaction is Fe(3+)(out) + L-ascorbate(in) = monodehydro-L-ascorbate radical(in) + Fe(2+)(out) + H(+). It catalyses the reaction Cu(2+)(out) + L-ascorbate(in) = Cu(+)(out) + monodehydro-L-ascorbate radical(in) + H(+). It carries out the reaction monodehydro-L-ascorbate radical(out) + L-ascorbate(in) = monodehydro-L-ascorbate radical(in) + L-ascorbate(out). Its function is as follows. Plasma membrane reductase that uses cytoplasmic ascorbate as an electron donor to reduce extracellular Fe(3+) into Fe(2+). Probably functions in dietary iron absorption at the brush border of duodenal enterocytes by producing Fe(2+), the divalent form of iron that can be transported into enterocytes. It is also able to reduce extracellular monodehydro-L-ascorbate and may be involved in extracellular ascorbate regeneration by erythrocytes in blood. May also act as a ferrireductase in airway epithelial cells. May also function as a cupric transmembrane reductase. The polypeptide is Plasma membrane ascorbate-dependent reductase CYBRD1 (Mus musculus (Mouse)).